A 100-amino-acid polypeptide reads, in one-letter code: Guanine nucleotide-binding protein subunit gamma 2 (100 aa).

Position 1 is an N-acetylmethionine (M1). Residues 19–55 (TRGKHRIQAELKRLEQEARFLEEELEQLEKMDNASAS) are a coiled coil. In terms of domain architecture, G protein gamma spans 21-100 (GKHRIQAELK…EAKRCGCSIL (80 aa)). A regulates lipidation and cell membrane subcellular localization region spans residues 90–96 (KEAKRCG). A lipid anchor (S-palmitoyl cysteine) is attached at C95. Residue C97 is modified to Cysteine methyl ester. C97 carries S-farnesyl cysteine lipidation. The propeptide at 98-100 (SIL) is removed in mature form.

G proteins are composed of 3 units, alpha, beta and gamma. GPG1 interacts with the beta subunit GB1. The dimer GB1-GG2 interacts with NDL1, NDL2 and NDL3. Binds to NUDT7. As to expression, mostly expressed in roots (excluded from the stele), seedlings (especially at the hypocotyl/root junction), floral stems, floral buds, flowers and siliques, and, to a lower extent, in leaves (restricted to guard cells). Also present in hydathods.

Its subcellular location is the cell membrane. Its function is as follows. Guanine nucleotide-binding proteins (G proteins) are involved as a modulator or transducer in various transmembrane signaling systems. The beta and gamma chains are required for the GTPase activity, for replacement of GDP by GTP, and for G protein-effector interaction. Involved in the abscisic acid (ABA) and ethylene signaling pathways. Regulates basipetal transport of auxin (IAA) in roots and hypocotyls, and thus modulates root architecture (e.g. lateral root formation). The heterotrimeric G-protein controls defense responses to necrotrophic and vascular fungi probably by modulating cell wall-related genes expression; involved in resistance to Plectosphaerella cucumerina. In Arabidopsis thaliana (Mouse-ear cress), this protein is Guanine nucleotide-binding protein subunit gamma 2 (GG2).